The primary structure comprises 82 residues: Sec-independent protein translocase protein TatA (82 aa).

Residues 2 to 22 traverse the membrane as a helical segment; that stretch reads GFGGISLWQLLIVLAIIVLLF. The tract at residues 43–82 is disordered; the sequence is KAMSDEKNTDKEKPEQIQKSEESAPLDSAHTEKNKDNNKV. Basic and acidic residues-rich tracts occupy residues 44–64 and 71–82; these read AMSD…KSEE and AHTEKNKDNNKV.

The protein belongs to the TatA/E family. As to quaternary structure, the Tat system comprises two distinct complexes: a TatABC complex, containing multiple copies of TatA, TatB and TatC subunits, and a separate TatA complex, containing only TatA subunits. Substrates initially bind to the TatABC complex, which probably triggers association of the separate TatA complex to form the active translocon.

The protein localises to the cell inner membrane. In terms of biological role, part of the twin-arginine translocation (Tat) system that transports large folded proteins containing a characteristic twin-arginine motif in their signal peptide across membranes. TatA could form the protein-conducting channel of the Tat system. This is Sec-independent protein translocase protein TatA from Pseudoalteromonas translucida (strain TAC 125).